A 1008-amino-acid chain; its full sequence is Kinesin-like protein KIN-5C (1008 aa).

Residues 12–359 (NVQVLLRCRP…LDYAHRAKSI (348 aa)) form the Kinesin motor domain. ATP is bound at residue 98–105 (GQTGTGKT). Residues 402–459 (KDRYQQEENERKAMADQIEQMTTSLEANQKQINDLQEKYDSELQHSADLSKKLEATEK) are a coiled coil. Disordered regions lie at residues 910–931 (VEAH…TAGI), 943–962 (YKDY…EVPS), and 975–1008 (ESLM…TINN). Positions 913 to 925 (HLGESQHLQESHS) are enriched in basic and acidic residues. Over residues 979 to 995 (DEFRENHPYEPSKDRRP) the composition is skewed to basic and acidic residues.

The protein belongs to the TRAFAC class myosin-kinesin ATPase superfamily. Kinesin family. KIN-5/BimC subfamily.

Its subcellular location is the cytoplasm. It is found in the cytoskeleton. The protein resides in the spindle. Its function is as follows. Responsible for microtubule translocation. May be important for the organization of phragmoplast-specific arrays of microtubules. Plays an essential role in stabilizing the mitotic spindle. Required during mitotic cytokinesis. The polypeptide is Kinesin-like protein KIN-5C (Oryza sativa subsp. japonica (Rice)).